The chain runs to 615 residues: Proteasome-associated ATPase (615 aa).

Positions 1–13 (MSESQRHEAREDG) are enriched in basic and acidic residues. The tract at residues 1 to 32 (MSESQRHEAREDGFTTPHESGLSSEDAAELEE) is disordered. A coiled-coil region spans residues 22–100 (LSSEDAAELE…LREEVDRLGQ (79 aa)). Position 302 to 307 (302 to 307 (GCGKTL)) interacts with ATP. A docks into pockets in the proteasome alpha-ring region spans residues 614 to 615 (YL).

It belongs to the AAA ATPase family. Homohexamer. Assembles into a hexameric ring structure that caps the 20S proteasome core. Strongly interacts with the prokaryotic ubiquitin-like protein Pup through a hydrophobic interface; the interacting region of ARC lies in its N-terminal coiled-coil domain. There is one Pup binding site per ARC hexamer ring. Upon ATP-binding, the C-terminus of ARC interacts with the alpha-rings of the proteasome core, possibly by binding to the intersubunit pockets.

Its pathway is protein degradation; proteasomal Pup-dependent pathway. Its function is as follows. ATPase which is responsible for recognizing, binding, unfolding and translocation of pupylated proteins into the bacterial 20S proteasome core particle. May be essential for opening the gate of the 20S proteasome via an interaction with its C-terminus, thereby allowing substrate entry and access to the site of proteolysis. Thus, the C-termini of the proteasomal ATPase may function like a 'key in a lock' to induce gate opening and therefore regulate proteolysis. The chain is Proteasome-associated ATPase from Mycobacterium sp. (strain JLS).